The following is a 377-amino-acid chain: Chaperone protein DnaJ (377 aa).

Residues 5–70 (DYYEVLGVGK…EKKAAYDQYG (66 aa)) enclose the J domain. The segment at 137 to 215 (GHEAQIRVPH…CHGQGKLKSQ (79 aa)) adopts a CR-type zinc-finger fold. Cys-150, Cys-153, Cys-167, Cys-170, Cys-189, Cys-192, Cys-203, and Cys-206 together coordinate Zn(2+). CXXCXGXG motif repeat units lie at residues 150-157 (CDHCHGNG), 167-174 (CPTCHGAG), 189-196 (CPKCHGSG), and 203-210 (CTKCHGQG).

It belongs to the DnaJ family. As to quaternary structure, homodimer. The cofactor is Zn(2+).

The protein resides in the cytoplasm. In terms of biological role, participates actively in the response to hyperosmotic and heat shock by preventing the aggregation of stress-denatured proteins and by disaggregating proteins, also in an autonomous, DnaK-independent fashion. Unfolded proteins bind initially to DnaJ; upon interaction with the DnaJ-bound protein, DnaK hydrolyzes its bound ATP, resulting in the formation of a stable complex. GrpE releases ADP from DnaK; ATP binding to DnaK triggers the release of the substrate protein, thus completing the reaction cycle. Several rounds of ATP-dependent interactions between DnaJ, DnaK and GrpE are required for fully efficient folding. Also involved, together with DnaK and GrpE, in the DNA replication of plasmids through activation of initiation proteins. The polypeptide is Chaperone protein DnaJ (Cupriavidus taiwanensis (strain DSM 17343 / BCRC 17206 / CCUG 44338 / CIP 107171 / LMG 19424 / R1) (Ralstonia taiwanensis (strain LMG 19424))).